Reading from the N-terminus, the 410-residue chain is Putative competence-damage inducible protein (410 aa).

The protein belongs to the CinA family.

This Clostridium beijerinckii (strain ATCC 51743 / NCIMB 8052) (Clostridium acetobutylicum) protein is Putative competence-damage inducible protein.